The primary structure comprises 614 residues: UvrABC system protein C (614 aa).

A GIY-YIG domain is found at 26-104 (NLPGVYKMLG…IKEHRPPYNV (79 aa)). The UVR domain occupies 215-250 (SDIHTTLIEKMEHSAEALDFEKAAFYRDQLSMLREV).

This sequence belongs to the UvrC family. Interacts with UvrB in an incision complex.

The protein resides in the cytoplasm. The UvrABC repair system catalyzes the recognition and processing of DNA lesions. UvrC both incises the 5' and 3' sides of the lesion. The N-terminal half is responsible for the 3' incision and the C-terminal half is responsible for the 5' incision. This Psychrobacter sp. (strain PRwf-1) protein is UvrABC system protein C.